Consider the following 442-residue polypeptide: Chromosomal replication initiator protein DnaA (442 aa).

A domain I, interacts with DnaA modulators region spans residues 1-75 (MDAWPRCLER…GNGEVALAVG (75 aa)). The interval 75-104 (GSRPRAPEPAPAAAAVPSAPQAAPMVPFAG) is domain II. Positions 105 to 322 (NLDSHYTFAN…GALNTLVARA (218 aa)) are domain III, AAA+ region. Residues Gly150, Gly152, Lys153, and Thr154 each coordinate ATP. Positions 323-442 (NFTGRSITVE…WEKLIRKLSE (120 aa)) are domain IV, binds dsDNA.

The protein belongs to the DnaA family. Oligomerizes as a right-handed, spiral filament on DNA at oriC.

The protein resides in the cytoplasm. Its function is as follows. Plays an essential role in the initiation and regulation of chromosomal replication. ATP-DnaA binds to the origin of replication (oriC) to initiate formation of the DNA replication initiation complex once per cell cycle. Binds the DnaA box (a 9 base pair repeat at the origin) and separates the double-stranded (ds)DNA. Forms a right-handed helical filament on oriC DNA; dsDNA binds to the exterior of the filament while single-stranded (ss)DNA is stabiized in the filament's interior. The ATP-DnaA-oriC complex binds and stabilizes one strand of the AT-rich DNA unwinding element (DUE), permitting loading of DNA polymerase. After initiation quickly degrades to an ADP-DnaA complex that is not apt for DNA replication. Binds acidic phospholipids. The sequence is that of Chromosomal replication initiator protein DnaA from Xanthomonas euvesicatoria pv. vesicatoria (strain 85-10) (Xanthomonas campestris pv. vesicatoria).